The following is a 240-amino-acid chain: Ribonuclease PH (240 aa).

Residues Arg86 and 124 to 126 contribute to the phosphate site; that span reads GTR.

This sequence belongs to the RNase PH family. In terms of assembly, homohexameric ring arranged as a trimer of dimers.

The catalysed reaction is tRNA(n+1) + phosphate = tRNA(n) + a ribonucleoside 5'-diphosphate. Functionally, phosphorolytic 3'-5' exoribonuclease that plays an important role in tRNA 3'-end maturation. Removes nucleotide residues following the 3'-CCA terminus of tRNAs; can also add nucleotides to the ends of RNA molecules by using nucleoside diphosphates as substrates, but this may not be physiologically important. Probably plays a role in initiation of 16S rRNA degradation (leading to ribosome degradation) during starvation. The chain is Ribonuclease PH from Mannheimia succiniciproducens (strain KCTC 0769BP / MBEL55E).